The primary structure comprises 699 residues: Elongation factor G 1 (699 aa).

Residues 8–290 (ERYRNIGICA…AVIEYLPSPI (283 aa)) enclose the tr-type G domain. Residues 17 to 24 (AHVDAGKT), 88 to 92 (DTPGH), and 142 to 145 (NKMD) each bind GTP.

This sequence belongs to the TRAFAC class translation factor GTPase superfamily. Classic translation factor GTPase family. EF-G/EF-2 subfamily.

The protein resides in the cytoplasm. Functionally, catalyzes the GTP-dependent ribosomal translocation step during translation elongation. During this step, the ribosome changes from the pre-translocational (PRE) to the post-translocational (POST) state as the newly formed A-site-bound peptidyl-tRNA and P-site-bound deacylated tRNA move to the P and E sites, respectively. Catalyzes the coordinated movement of the two tRNA molecules, the mRNA and conformational changes in the ribosome. The sequence is that of Elongation factor G 1 from Vibrio vulnificus (strain YJ016).